The sequence spans 123 residues: Fluoride-specific ion channel FluC (123 aa).

Transmembrane regions (helical) follow at residues 1-21, 32-52, 64-84, and 99-119; these read MLEI…RYLM, ILSL…GLVI, IGLL…SFSY, and FGYT…GIYL. The Na(+) site is built by G74 and T77.

The protein belongs to the fluoride channel Fluc/FEX (TC 1.A.43) family.

The protein resides in the cell inner membrane. It catalyses the reaction fluoride(in) = fluoride(out). With respect to regulation, na(+) is not transported, but it plays an essential structural role and its presence is essential for fluoride channel function. Functionally, fluoride-specific ion channel. Important for reducing fluoride concentration in the cell, thus reducing its toxicity. The chain is Fluoride-specific ion channel FluC from Gloeothece citriformis (strain PCC 7424) (Cyanothece sp. (strain PCC 7424)).